The following is a 252-amino-acid chain: UPF0714 protein YndL (252 aa).

The helical transmembrane segment at Ile33 to Ala51 threads the bilayer.

This sequence belongs to the UPF0714 family.

It is found in the cell membrane. In Bacillus subtilis (strain 168), this protein is UPF0714 protein YndL (yndL).